The primary structure comprises 184 residues: Orotate phosphoribosyltransferase (184 aa).

5-phospho-alpha-D-ribose 1-diphosphate contacts are provided by residues Arg99, Lys100, Lys103, His105, and 125 to 133 (EDTTTTGNS). Thr129 and Arg157 together coordinate orotate.

This sequence belongs to the purine/pyrimidine phosphoribosyltransferase family. PyrE subfamily. As to quaternary structure, homodimer. Mg(2+) serves as cofactor.

The enzyme catalyses orotidine 5'-phosphate + diphosphate = orotate + 5-phospho-alpha-D-ribose 1-diphosphate. Its pathway is pyrimidine metabolism; UMP biosynthesis via de novo pathway; UMP from orotate: step 1/2. Functionally, catalyzes the transfer of a ribosyl phosphate group from 5-phosphoribose 1-diphosphate to orotate, leading to the formation of orotidine monophosphate (OMP). This Corynebacterium glutamicum (strain R) protein is Orotate phosphoribosyltransferase.